Consider the following 289-residue polypeptide: Inorganic pyrophosphatase (289 aa).

Ser2 is modified (N-acetylserine). Lys57 is modified (N6-acetyllysine). Residues Asp116, Asp121, and Asp153 each contribute to the Mg(2+) site. At Ser250 the chain carries Phosphoserine.

Belongs to the PPase family. In terms of assembly, homodimer. The cofactor is Mg(2+). The N-terminus is blocked. Highest levels are found in retinal rod outer segments.

Its subcellular location is the cytoplasm. The enzyme catalyses diphosphate + H2O = 2 phosphate + H(+). In Bos taurus (Bovine), this protein is Inorganic pyrophosphatase (PPA1).